The sequence spans 231 residues: 7-cyano-7-deazaguanine synthase (231 aa).

8–18 is an ATP binding site; the sequence is FSGGQDSTTCL. Zn(2+)-binding residues include Cys188, Cys197, Cys200, and Cys203.

This sequence belongs to the QueC family. It depends on Zn(2+) as a cofactor.

The enzyme catalyses 7-carboxy-7-deazaguanine + NH4(+) + ATP = 7-cyano-7-deazaguanine + ADP + phosphate + H2O + H(+). It participates in purine metabolism; 7-cyano-7-deazaguanine biosynthesis. Functionally, catalyzes the ATP-dependent conversion of 7-carboxy-7-deazaguanine (CDG) to 7-cyano-7-deazaguanine (preQ(0)). The sequence is that of 7-cyano-7-deazaguanine synthase from Escherichia fergusonii (strain ATCC 35469 / DSM 13698 / CCUG 18766 / IAM 14443 / JCM 21226 / LMG 7866 / NBRC 102419 / NCTC 12128 / CDC 0568-73).